Reading from the N-terminus, the 359-residue chain is Guanine nucleotide-binding protein G(o) subunit alpha (359 aa).

The interval 1–26 (MGGCVSATPEEREAKTRSSVIDRQQR) is disordered. Residue Gly-2 is the site of N-myristoyl glycine attachment. A lipid anchor (S-palmitoyl cysteine) is attached at Cys-4. One can recognise a G-alpha domain in the interval 34–359 (NTIKILLLGA…RENLEAANLL (326 aa)). The segment at 37 to 50 (KILLLGAGESGKST) is G1 motif. GTP-binding positions include 42–49 (GAGESGKS), 178–184 (LRSRVQT), 203–207 (DVGGQ), 272–275 (NKAD), and Ala-331. Residues Ser-49 and Thr-184 each contribute to the Mg(2+) site. The tract at residues 176-184 (DVLRSRVQT) is G2 motif. Residues 199–208 (YRVVDVGGQR) are G3 motif. The interval 268–275 (ILFLNKAD) is G4 motif. A G5 motif region spans residues 329–334 (TTATDT).

Belongs to the G-alpha family. G(i/o/t/z) subfamily. In terms of assembly, g proteins are composed of 3 units; alpha, beta and gamma. The alpha chain contains the guanine nucleotide binding site.

Its function is as follows. Guanine nucleotide-binding proteins (G proteins) are involved as modulators or transducers in various transmembrane signaling systems. The G(o) protein function is not clear. The polypeptide is Guanine nucleotide-binding protein G(o) subunit alpha (Geodia cydonium (Sponge)).